Consider the following 166-residue polypeptide: Bud site selection protein 20 (166 aa).

The Nuclear localization signal motif lies at K7–R16. Residues D17–V31 are nuclear export signal-like (NES-like). The segment at H49 to H73 adopts a C2H2-type zinc-finger fold.

The protein belongs to the ZNF593/BUD20 C2H2-type zinc-finger protein family. Associates with pre-60S ribosomal particles; released from the pre-60S particle very early in the cytoplasm.

The protein localises to the nucleus. The protein resides in the cytoplasm. Its function is as follows. Involved in pre-60S ribosomal particles maturation by promoting the nuclear export of the 60S ribosome. Involved in positioning the proximal bud pole signal. The sequence is that of Bud site selection protein 20 from Saccharomyces cerevisiae (strain ATCC 204508 / S288c) (Baker's yeast).